Here is a 471-residue protein sequence, read N- to C-terminus: ATP synthase subunit beta (471 aa).

Position 153 to 160 (153 to 160) interacts with ATP; sequence GGAGVGKT.

It belongs to the ATPase alpha/beta chains family. F-type ATPases have 2 components, CF(1) - the catalytic core - and CF(0) - the membrane proton channel. CF(1) has five subunits: alpha(3), beta(3), gamma(1), delta(1), epsilon(1). CF(0) has three main subunits: a(1), b(2) and c(9-12). The alpha and beta chains form an alternating ring which encloses part of the gamma chain. CF(1) is attached to CF(0) by a central stalk formed by the gamma and epsilon chains, while a peripheral stalk is formed by the delta and b chains.

Its subcellular location is the cell inner membrane. The enzyme catalyses ATP + H2O + 4 H(+)(in) = ADP + phosphate + 5 H(+)(out). Functionally, produces ATP from ADP in the presence of a proton gradient across the membrane. The catalytic sites are hosted primarily by the beta subunits. The sequence is that of ATP synthase subunit beta from Verminephrobacter eiseniae (strain EF01-2).